The following is a 643-amino-acid chain: 1-deoxy-D-xylulose-5-phosphate synthase (643 aa).

Thiamine diphosphate-binding positions include His78 and 119–121 (AHS). Asp150 lines the Mg(2+) pocket. Residues 151 to 152 (GS), Asn179, Tyr288, and Glu370 contribute to the thiamine diphosphate site. Position 179 (Asn179) interacts with Mg(2+).

Belongs to the transketolase family. DXPS subfamily. Homodimer. Mg(2+) serves as cofactor. The cofactor is thiamine diphosphate.

The catalysed reaction is D-glyceraldehyde 3-phosphate + pyruvate + H(+) = 1-deoxy-D-xylulose 5-phosphate + CO2. It participates in metabolic intermediate biosynthesis; 1-deoxy-D-xylulose 5-phosphate biosynthesis; 1-deoxy-D-xylulose 5-phosphate from D-glyceraldehyde 3-phosphate and pyruvate: step 1/1. Its function is as follows. Catalyzes the acyloin condensation reaction between C atoms 2 and 3 of pyruvate and glyceraldehyde 3-phosphate to yield 1-deoxy-D-xylulose-5-phosphate (DXP). The chain is 1-deoxy-D-xylulose-5-phosphate synthase from Brucella abortus (strain S19).